A 425-amino-acid chain; its full sequence is Multifunctional CCA protein (425 aa).

Glycine 8 and arginine 11 together coordinate ATP. Residues glycine 8 and arginine 11 each contribute to the CTP site. Residues glutamate 21 and aspartate 23 each coordinate Mg(2+). Residues arginine 91, arginine 137, and arginine 140 each contribute to the ATP site. Residues arginine 91, arginine 137, and arginine 140 each coordinate CTP. The HD domain occupies 228-329; sequence TGVHTLMVLD…VDLLDRLGAL (102 aa).

This sequence belongs to the tRNA nucleotidyltransferase/poly(A) polymerase family. Bacterial CCA-adding enzyme type 1 subfamily. In terms of assembly, monomer. Can also form homodimers and oligomers. The cofactor is Mg(2+). It depends on Ni(2+) as a cofactor.

The catalysed reaction is a tRNA precursor + 2 CTP + ATP = a tRNA with a 3' CCA end + 3 diphosphate. It catalyses the reaction a tRNA with a 3' CCA end + 2 CTP + ATP = a tRNA with a 3' CCACCA end + 3 diphosphate. In terms of biological role, catalyzes the addition and repair of the essential 3'-terminal CCA sequence in tRNAs without using a nucleic acid template. Adds these three nucleotides in the order of C, C, and A to the tRNA nucleotide-73, using CTP and ATP as substrates and producing inorganic pyrophosphate. tRNA 3'-terminal CCA addition is required both for tRNA processing and repair. Also involved in tRNA surveillance by mediating tandem CCA addition to generate a CCACCA at the 3' terminus of unstable tRNAs. While stable tRNAs receive only 3'-terminal CCA, unstable tRNAs are marked with CCACCA and rapidly degraded. The protein is Multifunctional CCA protein of Methylococcus capsulatus (strain ATCC 33009 / NCIMB 11132 / Bath).